A 231-amino-acid chain; its full sequence is tRNA (guanine-N(1)-)-methyltransferase (231 aa).

Residues Gly112 and Ile132–Leu137 contribute to the S-adenosyl-L-methionine site.

Belongs to the RNA methyltransferase TrmD family. In terms of assembly, homodimer.

It localises to the cytoplasm. It carries out the reaction guanosine(37) in tRNA + S-adenosyl-L-methionine = N(1)-methylguanosine(37) in tRNA + S-adenosyl-L-homocysteine + H(+). In terms of biological role, specifically methylates guanosine-37 in various tRNAs. The polypeptide is tRNA (guanine-N(1)-)-methyltransferase (Sulfurimonas denitrificans (strain ATCC 33889 / DSM 1251) (Thiomicrospira denitrificans (strain ATCC 33889 / DSM 1251))).